An 895-amino-acid polypeptide reads, in one-letter code: Zinc finger protein 281 (895 aa).

Disordered regions lie at residues 1–44 (MKIG…EMEP) and 63–113 (FTRP…AFPS). K2 participates in a covalent cross-link: Glycyl lysine isopeptide (Lys-Gly) (interchain with G-Cter in SUMO2). Positions 7–36 (FLSGGGGTGSSGGSGSGGGGSGGGGGGGSS) are enriched in gly residues. Residues R65, K101, and K128 each participate in a glycyl lysine isopeptide (Lys-Gly) (interchain with G-Cter in SUMO2) cross-link. 2 stretches are compositionally biased toward basic and acidic residues: residues 130–140 (EKPADPEEQQS) and 202–218 (RTDD…DTNV). 2 disordered regions span residues 130–149 (EKPA…HHHY) and 183–253 (HVQQ…EGAI). Residues K213, K219, K225, K232, K242, and K259 each participate in a glycyl lysine isopeptide (Lys-Gly) (interchain with G-Cter in SUMO2) cross-link. 3 consecutive C2H2-type zinc fingers follow at residues 261–283 (HICD…VLIH), 289–311 (FQCS…EKIH), and 317–339 (FGCD…KRTH). Glycyl lysine isopeptide (Lys-Gly) (interchain with G-Cter in SUMO2) cross-links involve residues K301 and K325. The C2H2-type 4; atypical zinc finger occupies 345–367 (YKCDTCQQYFSRTDRLLKHRRTC). Residue K373 forms a Glycyl lysine isopeptide (Lys-Gly) (interchain with G-Cter in SUMO2) linkage. Residues 377-427 (SAEPGSSNHTNMGNLAVLSQGNTSSSRRKTKSKSIAIENKEQKTGKTNESQ) are disordered. A compositionally biased stretch (polar residues) spans 379–398 (EPGSSNHTNMGNLAVLSQGN). The residue at position 395 (S395) is a Phosphoserine. Glycyl lysine isopeptide (Lys-Gly) (interchain with G-Cter in SUMO2) cross-links involve residues K409, K416, K460, and K477. S484 is subject to Phosphoserine. Residues K493, K498, K539, K599, K617, and K622 each participate in a glycyl lysine isopeptide (Lys-Gly) (interchain with G-Cter in SUMO2) cross-link. Positions 638–660 (SGEHSELVQEENLSPGTQTPSND) are disordered. Residues 648 to 660 (ENLSPGTQTPSND) show a composition bias toward polar residues. S651 carries the post-translational modification Phosphoserine. Glycyl lysine isopeptide (Lys-Gly) (interchain with G-Cter in SUMO2) cross-links involve residues K661 and K670. Positions 778-789 (SSAFQSSSQKLT) are enriched in polar residues. A disordered region spans residues 778 to 817 (SSAFQSSSQKLTSQKEQKNLESSTGFQIPSQELASQIDPQ). Position 785 is a phosphoserine (S785). Residues K787, K792, and K795 each participate in a glycyl lysine isopeptide (Lys-Gly) (interchain with G-Cter in SUMO2) cross-link. Positions 797–815 (LESSTGFQIPSQELASQID) are enriched in polar residues. Position 807 is a phosphoserine (S807). Glycyl lysine isopeptide (Lys-Gly) (interchain with G-Cter in SUMO2) cross-links involve residues K818 and K840. Residue T888 is modified to Phosphothreonine.

This sequence belongs to the krueppel C2H2-type zinc-finger protein family.

The protein resides in the nucleus. In terms of biological role, transcription repressor that plays a role in regulation of embryonic stem cells (ESCs) differentiation. Required for ESCs differentiation and acts by mediating autorepression of NANOG in ESCs: binds to the NANOG promoter and promotes association of NANOG protein to its own promoter and recruits the NuRD complex, which deacetylates histones. Not required for establishement and maintenance of ESCs. Represses the transcription of a number of genes including GAST, ODC1 and VIM. Binds to the G-rich box in the enhancer region of these genes. This Homo sapiens (Human) protein is Zinc finger protein 281 (ZNF281).